A 1244-amino-acid polypeptide reads, in one-letter code: ATP-dependent RNA helicase DHX8 (1244 aa).

Residue Lys140 forms a Glycyl lysine isopeptide (Lys-Gly) (interchain with G-Cter in SUMO2) linkage. Disordered regions lie at residues 152–289 and 361–396; these read LMPS…PAIG and DVDQ…RPTH. Positions 160–169 are enriched in basic and acidic residues; the sequence is EKQRDPEHRD. Over residues 170–179 the composition is skewed to basic residues; it reads RTKKKKRSRS. Positions 180–220 are enriched in basic and acidic residues; that stretch reads RDRDRDRDRDRDRDRDRDRDRDKDRERDRDRERDRERDRER. Residues 221–234 show a composition bias toward basic residues; it reads DHKRRHRSRSRSHS. Positions 256 to 283 are enriched in basic and acidic residues; it reads FKDRKDREKYGERNLDRWRDKHVDRPPP. An S1 motif domain is found at 289-360; the sequence is GDIYNGKVTS…TGTKTSLSMK (72 aa). Residues 386-395 are compositionally biased toward basic and acidic residues; that stretch reads TSMRNPDRPT. Ser419 carries the post-translational modification Phosphoserine. Residue Lys423 forms a Glycyl lysine isopeptide (Lys-Gly) (interchain with G-Cter in SUMO2) linkage. Residue Ser484 is modified to Phosphoserine. The Helicase ATP-binding domain occupies 599–762; it reads VQAVHDNQIL…FYEAPIFTIP (164 aa). Residue 612–619 coordinates ATP; that stretch reads GETGSGKT. The short motif at 709–712 is the DEAH box element; that stretch reads DEAH. A Helicase C-terminal domain is found at 780–960; the sequence is YLDASLITVM…STVLSLKAMG (181 aa).

It belongs to the DEAD box helicase family. DEAH subfamily. DDX8/PRP22 sub-subfamily. In terms of assembly, identified in the spliceosome C complex. Interacts with ARRB2; the interaction is detected in the nucleus upon OR1D2 stimulation. Interacts with SRRM2. Interacts with CACTIN.

It localises to the nucleus. The catalysed reaction is ATP + H2O = ADP + phosphate + H(+). In terms of biological role, involved in pre-mRNA splicing as component of the spliceosome. Facilitates nuclear export of spliced mRNA by releasing the RNA from the spliceosome. The chain is ATP-dependent RNA helicase DHX8 (Dhx8) from Mus musculus (Mouse).